An 827-amino-acid polypeptide reads, in one-letter code: MSEAELEQTPSAGHVQEQPIEEEHEPEQEPTDAYTIGGPPRTPVEDAAAELSASLDVSGSDQSAEQSLDLSGVQAEAAAESEPPAKRQHRDISPISEDSTPASSTSTSSTRSSSSSRYDDVSEAEEAPPEPEPEQPQQQQQEEKKEDGQDQVKSPGPVELEAQEPAQPQKQKEVVDQEIETEDEPSSDTVICVADINPYGSGSNIDDFVMDPDAPPNAIITEVVTIPAPLHLKGTQQLGLPLAAPPPPPPPPAAEQVPETPASPTDDGEEPPAVYLSPYIRSRYMQESTPGLPTRLAPRDPRQRNMPPPAVVLPIQTVLSANVEAISDDSSETSSSDDDEEEEEDEDDALTMEHDNTSRETVITTGDPLMQKIDISENPDKIYFIRREDGTVHRGQVLQSRTTENAAAPDEYYVHYVGLNRRLDGWVGRHRISDNADDLGGITVLPAPPLAPDQPSTSREMLAQQAAAAAAASSERQKRAANKDYYLSYCENSRYDYSDRKMTRYQKRRYDEINHVQKSHAELTATQAALEKEHESITKIKYIDKLQFGNYEIDTWYFSPFPEEYGKARTLYVCEYCLKYMRFRSSYAYHLHECDRRRPPGREIYRKGNISIYEVNGKEESLYCQLLCLMAKLFLDHKVLYFDMDPFLFYILCETDKEGSHIVGYFSKEKKSLENYNVACILVLPPHQRKGFGKLLIAFSYELSRKEGVIGSPEKPLSDLGRLSYRSYWAYTLLELMKTRCAPEQITIKELSEMSGITHDDIIYTLQSMKMIKYWKGQNVICVTSKTIQDHLQLPQFKQPKLTIDTDYLVWSPQTAAAVVRAPGNSG.

Disordered stretches follow at residues 1–190, 237–276, 288–309, and 324–360; these read MSEA…SDTV, QLGL…AVYL, STPG…MPPP, and EAIS…TSRE. A compositionally biased stretch (acidic residues) spans 19–30; sequence PIEEEHEPEQEP. Residues 55-69 show a composition bias toward polar residues; the sequence is LDVSGSDQSAEQSLD. Residues 103–116 are compositionally biased toward low complexity; sequence SSTSTSSTRSSSSS. Over residues 121–133 the composition is skewed to acidic residues; it reads VSEAEEAPPEPEP. Residues 141–150 show a composition bias toward basic and acidic residues; sequence QEEKKEDGQD. Residues 176–186 show a composition bias toward acidic residues; that stretch reads DQEIETEDEPS. Residues 243–253 show a composition bias toward pro residues; the sequence is AAPPPPPPPPA. Acidic residues predominate over residues 326 to 350; that stretch reads ISDDSSETSSSDDDEEEEEDEDDAL. A Glycyl lysine isopeptide (Lys-Gly) (interchain with G-Cter in ubiquitin) cross-link involves residue lysine 372. The 52-residue stretch at 382–433 folds into the Tudor-knot domain; it reads IYFIRREDGTVHRGQVLQSRTTENAAAPDEYYVHYVGLNRRLDGWVGRHRIS. Residues lysine 483, lysine 532, and lysine 539 each participate in a glycyl lysine isopeptide (Lys-Gly) (interchain with G-Cter in ubiquitin) cross-link. Positions 538–813 constitute an MYST-type HAT domain; it reads TKIKYIDKLQ…IDTDYLVWSP (276 aa). A C2HC MYST-type zinc finger spans residues 571–596; it reads LYVCEYCLKYMRFRSSYAYHLHECDR. Zn(2+) is bound by residues cysteine 574, cysteine 577, histidine 590, and cysteine 594. An N6-acetyllysine; by autocatalysis modification is found at lysine 638. Acetyl-CoA-binding residues include isoleucine 681, arginine 689, lysine 690, glycine 691, glycine 693, and lysine 694. Glutamate 714 functions as the Proton donor/acceptor in the catalytic mechanism. A Glycyl lysine isopeptide (Lys-Gly) (interchain with G-Cter in ubiquitin) cross-link involves residue lysine 715. 2 residues coordinate acetyl-CoA: serine 718 and serine 727. Residue lysine 749 forms a Glycyl lysine isopeptide (Lys-Gly) (interchain with G-Cter in ubiquitin) linkage. Tyrosine 774 provides a ligand contact to acetyl-CoA. Glycyl lysine isopeptide (Lys-Gly) (interchain with G-Cter in ubiquitin) cross-links involve residues lysine 776, lysine 798, and lysine 801. Residue lysine 798 coordinates acetyl-CoA.

This sequence belongs to the MYST (SAS/MOZ) family. As to quaternary structure, component of the male-specific lethal (MSL) histone acetyltransferase complex, composed of mof, mle, msl-1, msl-2 and msl-3 proteins, as well as roX1 and roX2 non-coding RNAs. Component of a maternal MSL subcomplex composed of mof, msl-1 and msl-3. Component of the non-specific lethal (NLS) histone acetyltransferase complex at least composed of mof, nls1, dgt1/NSL2, Rcd1/NSL3, Rcd5/MCRS2, MBD-R2 and wds. In males, interacts with nucleoporin Mgtor. Post-translationally, autoacetylation at Lys-638 is required for binding histone H4 with high affinity and for proper function. In terms of processing, ubiquitinated by msl-2.

The protein resides in the nucleus. It localises to the chromosome. The enzyme catalyses L-lysyl-[histone] + acetyl-CoA = N(6)-acetyl-L-lysyl-[histone] + CoA + H(+). Functionally, histone acetyltransferase that catalyzes the formation of the majority of histone H4 acetylation at 'Lys-16' (H4K16ac), an epigenetic mark that prevents chromatin compaction and constitutes the only acetylation mark intergenerationally transmitted. Catalytic component of the male-specific lethal (MSL) complex, a multiprotein complex essential for elevating transcription of the single X chromosome in the male (X chromosome dosage compensation). The MSL complex specifically associates with the single X chromosome in males and mediates formation of H4K16ac, promoting a two-fold activation of X chromosome. Dosage compensation ensures that males with a single X chromosome have the same amount of most X-linked gene products as females with two X chromosomes. In oocytes, mof is also part of a maternal MSL subcomplex that mediates H4K16ac deposition for intergenerational transmission: H4K16ac prepares the chromatin landscape for establishment of nucleosome accessibility and poises genes for future activation. H4K16ac constitutes the only acetylation mark maintained from oocytes to fertilized embryos. Mof also constitutes the catalytic component of the non-specific lethal (NLS) complex, which promotes expression of housekeeping genes on X chromosome and autosomes. The NSL complex promotes strong expression of housekeeping genes compared to the two-fold expression mediated by the MSL complex on X chromosome, suggesting that the activation potential of mof is constrained in the context of dosage compensation. The sequence is that of Histone acetyltransferase MOF from Drosophila melanogaster (Fruit fly).